A 439-amino-acid chain; its full sequence is Ribosomal protein uS12 methylthiotransferase RimO (439 aa).

The MTTase N-terminal domain maps to 3 to 113 (HKVGFVSLGC…VVNAVHQHLP (111 aa)). Residues cysteine 12, cysteine 48, cysteine 77, cysteine 144, cysteine 148, and cysteine 151 each contribute to the [4Fe-4S] cluster site. The Radical SAM core domain occupies 130–367 (LTPRHYAYLK…MQVQAEISRN (238 aa)). In terms of domain architecture, TRAM spans 370-436 (KNKIGSTQTV…DYDLYGDLEY (67 aa)).

It belongs to the methylthiotransferase family. RimO subfamily. [4Fe-4S] cluster serves as cofactor.

The protein resides in the cytoplasm. It catalyses the reaction L-aspartate(89)-[ribosomal protein uS12]-hydrogen + (sulfur carrier)-SH + AH2 + 2 S-adenosyl-L-methionine = 3-methylsulfanyl-L-aspartate(89)-[ribosomal protein uS12]-hydrogen + (sulfur carrier)-H + 5'-deoxyadenosine + L-methionine + A + S-adenosyl-L-homocysteine + 2 H(+). Functionally, catalyzes the methylthiolation of an aspartic acid residue of ribosomal protein uS12. The chain is Ribosomal protein uS12 methylthiotransferase RimO from Legionella pneumophila (strain Corby).